We begin with the raw amino-acid sequence, 339 residues long: MVLGVVGISYREAALKERERAIQYLQSFEKNLFLAQRFLGKGGAFIPLLTCHRAELYYYSESPEIAQAALLSELTSQGIRPYRHRGLSCFTHLFQVTSGIDSLIFGETEIQGQVKRAYLKGSKERELPFDLHFLFQKALKEGKEYRSRIGFPDHQVTIESVVQEILLSYDKSIYTNFLFVGYSDINRKVAAYLYQHGYHRITFCSRQQVTAPYRTLSRETLSFRQPYDVIFFGSSESASQFSDLSCESLASIPKRIVFDFNVPRTFLWKETPTGFVYLDIDFISECVQKRLQCTKEGVNKAKLLLTCAAKKQWEIYEKKSSHITQRQISSPRIPSVLSY.

Substrate-binding positions include threonine 50–arginine 53, serine 102, glutamate 107–glutamate 109, and glutamine 113. Residue cysteine 51 is the Nucleophile of the active site. Glycine 181–asparagine 186 is an NADP(+) binding site.

The protein belongs to the glutamyl-tRNA reductase family. In terms of assembly, homodimer.

The enzyme catalyses (S)-4-amino-5-oxopentanoate + tRNA(Glu) + NADP(+) = L-glutamyl-tRNA(Glu) + NADPH + H(+). Its pathway is porphyrin-containing compound metabolism; protoporphyrin-IX biosynthesis; 5-aminolevulinate from L-glutamyl-tRNA(Glu): step 1/2. Catalyzes the NADPH-dependent reduction of glutamyl-tRNA(Glu) to glutamate 1-semialdehyde (GSA). This Chlamydia pneumoniae (Chlamydophila pneumoniae) protein is Glutamyl-tRNA reductase.